Consider the following 206-residue polypeptide: Probable thymidylate kinase (206 aa).

ATP is bound at residue 7 to 14; the sequence is GIDGSGKS.

Belongs to the thymidylate kinase family.

It catalyses the reaction dTMP + ATP = dTDP + ADP. In Methanospirillum hungatei JF-1 (strain ATCC 27890 / DSM 864 / NBRC 100397 / JF-1), this protein is Probable thymidylate kinase.